The chain runs to 504 residues: MTAEGRYLEIRKKTVKSKFRFPASSSSTRCLICSAQATGFHFEAQSCSACAAFFRRTVALTKSFKCITGRDDCNVHYSMHQICRSCRHKKCLSNGMKPGGVQPKKPNIETGRAFFTKSGLKRNKKFANVSPQTADEQKLVVEGVKVPKIEVQEPNSLEDLEQDNEFVIKTPTPRKISSSTSFSASTTTNYSTPGPSPMAPCSAGPDVLTLFIREEMKLGERRRLLFSERAVGTLLGQNKHCPYKKEDIKPLVFHDFRLTIKTHIMLVYEWLQTWPELQELDDFDRMSLLRKAVLIHFLLDPSFLSYQIGEPDKLIMQNGGFISTADHHGVGWEDETDISGENKRKYYVPIMKQITDEIMPAMEAMKITFEEFVALKALACFQGGFENVSEAKRHLITQQVNRIMTSLHTHYLENSEEKIAERFGTIVLMLSNIFTAGNDFVQNHREIDIFHIWDLDKLVLQLLNLDKIMETEARETAEKRAMRNGINVVNNNNDVLLGQAKLEK.

The segment at residues 27–103 (STRCLICSAQ…NGMKPGGVQP (77 aa)) is a DNA-binding region (nuclear receptor). NR C4-type zinc fingers lie at residues 30 to 50 (CLIC…CSAC) and 66 to 86 (CITG…CRSC). Residues 177 to 192 (SSSTSFSASTTTNYST) show a composition bias toward low complexity. Residues 177 to 199 (SSSTSFSASTTTNYSTPGPSPMA) form a disordered region. In terms of domain architecture, NR LBD spans 214 to 466 (EEMKLGERRR…KLVLQLLNLD (253 aa)). Positions 455-466 (LDKLVLQLLNLD) are AF-2.

Belongs to the nuclear hormone receptor family. In terms of assembly, interacts with nuclear hormone receptor nhr-49; the interaction is direct. In terms of tissue distribution, expressed in the intestine and in some head and tail neurons, as well as the ventral nerve cord.

It is found in the nucleus. In terms of biological role, transcription factor. Binds to regulatory elements and regulates transcription of target genes, including acyltransferase dgat-2. As part of a lysosome-to-nucleus retrograde lipid signaling pathway, acts as a direct nuclear receptor of oleoylethanolamide (OEA) and, acting in concert with nuclear hormone receptor nhr-49, activates the transcription of genes promoting longevity and mitochondrial beta-oxidation. Required to modulate expression of delta-9 fatty acid desaturases, thereby regulating lipid metabolism; in some contexts, acting in concert with nhr-49. Involved in modulation of lipid metabolism in response to the citrate-induced mitochondrial unfolded protein response (mtUPR), acting downstream of transcription factor dve-1 and ubiquitin-like protein 5. Plays a role in modulating mitochondrial morphology and function. Involved in positively modulating life-span in a germline-dependent manner, acting in concert with nuclear hormone receptor daf-12. Plays a role in transgenerational lipid accumulation in response to a high-fat diet. This Caenorhabditis elegans protein is Nuclear hormone receptor family member nhr-80.